A 555-amino-acid chain; its full sequence is Urocanate hydratase (555 aa).

Residues 52-53 (GG), Gln130, 176-178 (GMG), Glu196, Arg201, 242-243 (NA), 263-267 (QTSAH), 273-274 (YL), and Tyr322 contribute to the NAD(+) site. Cys410 is an active-site residue. An NAD(+)-binding site is contributed by Gly492.

The protein belongs to the urocanase family. NAD(+) is required as a cofactor.

Its subcellular location is the cytoplasm. It carries out the reaction 4-imidazolone-5-propanoate = trans-urocanate + H2O. It participates in amino-acid degradation; L-histidine degradation into L-glutamate; N-formimidoyl-L-glutamate from L-histidine: step 2/3. Catalyzes the conversion of urocanate to 4-imidazolone-5-propionate. In Shewanella baltica (strain OS195), this protein is Urocanate hydratase.